Here is a 648-residue protein sequence, read N- to C-terminus: Threonine--tRNA ligase (648 aa).

The TGS domain maps to 1–61; that stretch reads MIDIILPDGS…INTATVKAIT (61 aa). The catalytic stretch occupies residues 243-549; sequence DHRKLGRELE…LIEHYSGKLP (307 aa). Residues Cys349, His400, and His526 each coordinate Zn(2+).

The protein belongs to the class-II aminoacyl-tRNA synthetase family. Homodimer. It depends on Zn(2+) as a cofactor.

It is found in the cytoplasm. The enzyme catalyses tRNA(Thr) + L-threonine + ATP = L-threonyl-tRNA(Thr) + AMP + diphosphate + H(+). Functionally, catalyzes the attachment of threonine to tRNA(Thr) in a two-step reaction: L-threonine is first activated by ATP to form Thr-AMP and then transferred to the acceptor end of tRNA(Thr). Also edits incorrectly charged L-seryl-tRNA(Thr). In Orientia tsutsugamushi (strain Ikeda) (Rickettsia tsutsugamushi), this protein is Threonine--tRNA ligase.